Here is a 498-residue protein sequence, read N- to C-terminus: Nucleobase transporter PlAzg2 (498 aa).

13 consecutive transmembrane segments (helical) span residues 88 to 108, 118 to 138, 142 to 162, 169 to 189, 203 to 223, 236 to 256, 259 to 279, 312 to 332, 357 to 377, 388 to 408, 412 to 432, 443 to 463, and 478 to 498; these read LLAG…NSSI, AGII…GLWG, LVIV…VQGM, ALAA…TSLV, AISV…GGVI, FADP…ILYI, VPGN…LFKA, TLVI…VGLI, ILSG…AAGI, IATG…TLVP, VAPI…HISF, FIIA…IGFI, and VKPL…LQTM.

It belongs to the nucleobase:cation symporter-2 (NCS2) (TC 2.A.40) family. Azg-like subfamily.

It is found in the cell membrane. Its activity is regulated as follows. Inhibited by the proton gradient disruptor carbonyl cyanide m-chlorophenylhydrazone (CCCP), but not by the sodium gradient disruptor ouabain. Its function is as follows. Transports adenine, guanine, hypoxanthine, xanthine, cytosine and uracil. Transport is probably proton-dependent. The sequence is that of Nucleobase transporter PlAzg2 from Paenibacillus larvae subsp. larvae (strain NRRL B-3650 / LMG 16245).